A 195-amino-acid chain; its full sequence is Imidazoleglycerol-phosphate dehydratase (195 aa).

It belongs to the imidazoleglycerol-phosphate dehydratase family.

The protein localises to the cytoplasm. It carries out the reaction D-erythro-1-(imidazol-4-yl)glycerol 3-phosphate = 3-(imidazol-4-yl)-2-oxopropyl phosphate + H2O. It participates in amino-acid biosynthesis; L-histidine biosynthesis; L-histidine from 5-phospho-alpha-D-ribose 1-diphosphate: step 6/9. The polypeptide is Imidazoleglycerol-phosphate dehydratase (Thermotoga neapolitana (strain ATCC 49049 / DSM 4359 / NBRC 107923 / NS-E)).